Here is a 225-residue protein sequence, read N- to C-terminus: tRNA (guanine-N(7)-)-methyltransferase (225 aa).

S-adenosyl-L-methionine contacts are provided by glutamate 56, glutamate 81, aspartate 108, and aspartate 131. Residue aspartate 131 is part of the active site. Substrate is bound by residues lysine 135, aspartate 167, and 204–207 (TKFE).

This sequence belongs to the class I-like SAM-binding methyltransferase superfamily. TrmB family.

The catalysed reaction is guanosine(46) in tRNA + S-adenosyl-L-methionine = N(7)-methylguanosine(46) in tRNA + S-adenosyl-L-homocysteine. The protein operates within tRNA modification; N(7)-methylguanine-tRNA biosynthesis. Its function is as follows. Catalyzes the formation of N(7)-methylguanine at position 46 (m7G46) in tRNA. The sequence is that of tRNA (guanine-N(7)-)-methyltransferase from Legionella pneumophila (strain Corby).